The sequence spans 275 residues: MTSEPSTSSEAGSSSLLDADKTNLLQEALVRAGVIRSQRQGISPTATNIKSPKKSALFEKIASHPLMPIVELLLEKCETAATTFDRKAFETDDIKRLFQSLEQRGVQLSSNRDEVDELMETAILALRTCMVELERVYSLMESFKAKYLATLRRTVCHEALVGNNGDSDDELSDNPLMPVLEMSEAAFQAQNKAMESALATLQSVSGSLSLPLQFTHQSITAAQIERNLEFLKQCGFPTQLPPNFLKPSNEKSPEKSEEEKSQKPSSSPKSPSLSD.

One can recognise an MEIS N-terminal domain in the interval 91 to 161 (TDDIKRLFQS…RRTVCHEALV (71 aa)). The disordered stretch occupies residues 239–275 (QLPPNFLKPSNEKSPEKSEEEKSQKPSSSPKSPSLSD). Over residues 248-262 (SNEKSPEKSEEEKSQ) the composition is skewed to basic and acidic residues. Positions 263-275 (KPSSSPKSPSLSD) are enriched in low complexity.

As to quaternary structure, interacts with homeobox protein ceh-20; the interaction is direct, facilitates nuclear localization of ceh-20 and may stabilize interaction of a ceh-20-nob-1 complex with DNA.

The protein localises to the nucleus. Probable transcription coregulator. Required for asymmetric cell divisions of the T hypodermal cells, and cell fate determination, in concert with homeobox proteins nob-1 and ceh-20. Acts downstream of the Wnt signaling pathway, and of ceh-20 and nob-1. This Caenorhabditis elegans protein is Transcriptional coregulator psa-3.